We begin with the raw amino-acid sequence, 547 residues long: Vacuolar fusion protein MON1 homolog B (547 aa).

Methionine 1 carries the post-translational modification N-acetylmethionine. The segment covering 1 to 15 (MEVGGDTAAPAPGGA) has biased composition (low complexity). The segment at 1-106 (MEVGGDTAAP…GGDPSDEEWR (106 aa)) is disordered. Residues serine 59 and serine 61 each carry the phosphoserine modification.

This sequence belongs to the MON1/SAND family. As to quaternary structure, interacts with CCNT2; down-regulates CCNT2-mediated activation of viral promoters during herpes simplex virus 1/HHV-1 infection. Found in a complex with RMC1, CCZ1 MON1A and MON1B.

The chain is Vacuolar fusion protein MON1 homolog B (MON1B) from Homo sapiens (Human).